Here is a 279-residue protein sequence, read N- to C-terminus: Movement protein (279 aa).

Residues 247–279 (ESEELNVESPPAAIGSSSASRSEAFRPQVVNGL) form a disordered region. The segment covering 254–268 (ESPPAAIGSSSASRS) has biased composition (low complexity).

It belongs to the cucumovirus movement protein family.

The protein resides in the host cell junction. It localises to the host plasmodesma. In terms of biological role, transports viral genome to neighboring plant cells directly through plasmosdesmata, without any budding. The movement protein allows efficient cell to cell propagation, by bypassing the host cell wall barrier. Acts by forming a tubular structure at the host plasmodesmata, enlarging it enough to allow free passage of virion capsids. The polypeptide is Movement protein (Cucumis sativus (Cucumber)).